Reading from the N-terminus, the 378-residue chain is Zinc finger protein DPF3 (378 aa).

Residue Lys99 forms a Glycyl lysine isopeptide (Lys-Gly) (interchain with G-Cter in SUMO2) linkage. The disordered stretch occupies residues 145–193 (VLENDENVEEGNEEEDLEEDIPKRKNRTRGRARGSAGGRRRHDAASQED). The segment covering 148–163 (NDENVEEGNEEEDLEE) has biased composition (acidic residues). The segment covering 168 to 186 (RKNRTRGRARGSAGGRRRH) has biased composition (basic residues). A C2H2-type zinc finger spans residues 198–221 (YVCDICGKRYKNRPGLSYHYAHTH). The interval 225 to 254 (EEGDEAQDQETRSPPNHRNENHRPQKGPDG) is disordered. PHD-type zinc fingers lie at residues 259-319 (NNYC…CKSC) and 316-366 (CKSC…CWEL). The segment at 317 to 332 (KSCILCGTSENDDQLL) is interaction with HDGFL2. Gly323 carries the phosphoserine modification.

Belongs to the requiem/DPF family. Component of the BAF complex, which includes at least actin (ACTB), ARID1A, ARID1B/BAF250, SMARCA2, SMARCA4/BRG1/BAF190A, ACTL6A/BAF53, ACTL6B/BAF53B, SMARCE1/BAF57, SMARCC1/BAF155, SMARCC2/BAF170, SMARCB1/SNF5/INI1, and one or more of SMARCD1/BAF60A, SMARCD2/BAF60B, or SMARCD3/BAF60C. In muscle cells, the BAF complex also contains DPF3. Interacts with acetylated histones H3 and H4. Component of neuron-specific chromatin remodeling complex (nBAF complex) composed of at least, ARID1A/BAF250A or ARID1B/BAF250B, SMARCD1/BAF60A, SMARCD3/BAF60C, SMARCA2/BRM/BAF190B, SMARCA4/BRG1/BAF190A, SMARCB1/BAF47, SMARCC1/BAF155, SMARCE1/BAF57, SMARCC2/BAF170, DPF1/BAF45B, DPF3/BAF45C, ACTL6B/BAF53B and actin. In terms of assembly, interacts with HDGFL2, SMARCA4/BRG1/BAF190A, SMARCC1/BAF155 and SMARCD1/BAF60A. Phosphorylation at Ser-323 enhances its interaction with HDGFL2.

It localises to the nucleus. In terms of biological role, belongs to the neuron-specific chromatin remodeling complex (nBAF complex). During neural development a switch from a stem/progenitor to a post-mitotic chromatin remodeling mechanism occurs as neurons exit the cell cycle and become committed to their adult state. The transition from proliferating neural stem/progenitor cells to post-mitotic neurons requires a switch in subunit composition of the npBAF and nBAF complexes. As neural progenitors exit mitosis and differentiate into neurons, npBAF complexes which contain ACTL6A/BAF53A and PHF10/BAF45A, are exchanged for homologous alternative ACTL6B/BAF53B and DPF1/BAF45B or DPF3/BAF45C subunits in neuron-specific complexes (nBAF). The npBAF complex is essential for the self-renewal/proliferative capacity of the multipotent neural stem cells. The nBAF complex along with CREST plays a role regulating the activity of genes essential for dendrite growth. Muscle-specific component of the BAF complex, a multiprotein complex involved in transcriptional activation and repression of select genes by chromatin remodeling (alteration of DNA-nucleosome topology). Specifically binds acetylated lysines on histone 3 and 4 (H3K14ac, H3K9ac, H4K5ac, H4K8ac, H4K12ac, H4K16ac). In the complex, it acts as a tissue-specific anchor between histone acetylations and methylations and chromatin remodeling. It thereby probably plays an essential role in heart and skeletal muscle development. Its function is as follows. Acts as a regulator of myogenesis in cooperation with HDGFL2. Mediates the interaction of HDGFL2 with the BAF complex. HDGFL2-DPF3a activate myogenic genes by increasing chromatin accessibility through recruitment of SMARCA4/BRG1/BAF190A (ATPase subunit of the BAF complex) to myogenic gene promoters. This is Zinc finger protein DPF3 (DPF3) from Homo sapiens (Human).